Here is a 258-residue protein sequence, read N- to C-terminus: UPF0246 protein ABO_1338 (258 aa).

Belongs to the UPF0246 family.

The chain is UPF0246 protein ABO_1338 from Alcanivorax borkumensis (strain ATCC 700651 / DSM 11573 / NCIMB 13689 / SK2).